Consider the following 339-residue polypeptide: D-erythrose-4-phosphate dehydrogenase (339 aa).

An NAD(+)-binding site is contributed by 11 to 12 (RI). Substrate contacts are provided by residues 153–155 (SCT), arginine 199, 212–213 (TK), and arginine 235. Cysteine 154 acts as the Nucleophile in catalysis. Asparagine 317 contacts NAD(+).

Belongs to the glyceraldehyde-3-phosphate dehydrogenase family. Epd subfamily. Homotetramer.

The protein resides in the cytoplasm. It carries out the reaction D-erythrose 4-phosphate + NAD(+) + H2O = 4-phospho-D-erythronate + NADH + 2 H(+). It participates in cofactor biosynthesis; pyridoxine 5'-phosphate biosynthesis; pyridoxine 5'-phosphate from D-erythrose 4-phosphate: step 1/5. Catalyzes the NAD-dependent conversion of D-erythrose 4-phosphate to 4-phosphoerythronate. This is D-erythrose-4-phosphate dehydrogenase from Shewanella pealeana (strain ATCC 700345 / ANG-SQ1).